The chain runs to 118 residues: Large ribosomal subunit protein bL20 (118 aa).

This sequence belongs to the bacterial ribosomal protein bL20 family.

Functionally, binds directly to 23S ribosomal RNA and is necessary for the in vitro assembly process of the 50S ribosomal subunit. It is not involved in the protein synthesizing functions of that subunit. This chain is Large ribosomal subunit protein bL20, found in Cyanothece sp. (strain PCC 7425 / ATCC 29141).